The following is a 592-amino-acid chain: Protein kinase C zeta type (592 aa).

Residues 15-98 (RVRLKAHYGG…EVLIIHVFPS (84 aa)) form the PB1 domain. Positions 79–145 (AFRLACQGRD…KRFNRRAYCG (67 aa)) are interaction with SQSTM1. The segment at 130–180 (GHLFQAKRFNRRAYCGQCSERIWGLARQGYRCINCKLLVHKRCHVLVPLTC) adopts a Phorbol-ester/DAG-type zinc-finger fold. One can recognise a Protein kinase domain in the interval 252–518 (FDLIRVIGRG…FSDIKSHAFF (267 aa)). ATP-binding positions include 258 to 266 (IGRGSYAKV) and Lys-281. Asp-376 (proton acceptor) is an active-site residue. Thr-410 bears the Phosphothreonine; by PDPK1 and PI3K mark. Positions 519–590 (RSIDWDLLEK…INPLLLSAEE (72 aa)) constitute an AGC-kinase C-terminal domain. Thr-560 bears the Phosphothreonine mark. Ser-591 bears the Phosphoserine mark.

This sequence belongs to the protein kinase superfamily. AGC Ser/Thr protein kinase family. PKC subfamily. As to quaternary structure, interacts with PARD6A, PARD6B and PARD6G. Part of a complex with PARD3, PARD6A or PARD6B or PARD6G and CDC42 or RAC1. Interacts with ADAP1/CENTA1. Forms a ternary complex with SQSTM1 and KCNAB2. Forms another ternary complex with SQSTM1 and GABRR3. Forms a complex with SQSTM1 and MAP2K5. Interacts (via the protein kinase domain) with WWC1. Forms a tripartite complex with WWC1 and DDR1, but predominantly in the absence of collagen. Component of the Par polarity complex, composed of at least phosphorylated PRKCZ, PARD3 and TIAM1. Interacts with PDPK1 (via N-terminal region). Interacts with WDFY2 (via WD repeats 1-3). Interacts with VAMP2. Forms a complex with WDFY2 and VAMP2. Interacts with APPL1. Interacts with WWC1, WWC2 and WWC3. Post-translationally, CDH5 is required for its phosphorylation at Thr-410. Phosphorylated by protein kinase PDPK1; phosphorylation is inhibited by the apoptotic C-terminal cleavage product of PKN2. Phosphorylation at Thr-410 by PI3K activates the kinase. As to expression, isoform 1: In brain, expressed in hippocampus, neocortex and cerebellum (at protein level). Also expressed in lung, liver, kidney, testis and to a lesser extent in pancreas, intestine and skin (at protein level). Isoform 2: Specifically expressed in brain where it localizes to the hippocampus, neocortex and cerebellum (at protein level).

It is found in the cytoplasm. Its subcellular location is the endosome. The protein resides in the cell junction. It localises to the membrane. The enzyme catalyses L-seryl-[protein] + ATP = O-phospho-L-seryl-[protein] + ADP + H(+). The catalysed reaction is L-threonyl-[protein] + ATP = O-phospho-L-threonyl-[protein] + ADP + H(+). Atypical PKCs (PRKCI and PRKCZ) exhibit an elevated basal enzymatic activity (that may be due to the interaction with SMG1 or SQSTM1) and are not regulated by diacylglycerol, phosphatidylserine, phorbol esters or calcium ions. Two specific sites, Thr-410 (activation loop of the kinase domain) and Thr-560 (turn motif), need to be phosphorylated for its full activation. Phosphatidylinositol 3,4,5-trisphosphate might be a physiological activator. Isoform 2: Constitutively active. In terms of biological role, calcium- and diacylglycerol-independent serine/threonine-protein kinase that functions in phosphatidylinositol 3-kinase (PI3K) pathway and mitogen-activated protein (MAP) kinase cascade, and is involved in NF-kappa-B activation, mitogenic signaling, cell proliferation, cell polarity, inflammatory response and maintenance of long-term potentiation (LTP). Upon lipopolysaccharide (LPS) treatment in macrophages, or following mitogenic stimuli, functions downstream of PI3K to activate MAP2K1/MEK1-MAPK1/ERK2 signaling cascade independently of RAF1 activation. Required for insulin-dependent activation of AKT3, but may function as an adapter rather than a direct activator. Upon insulin treatment may act as a downstream effector of PI3K and contribute to the activation of translocation of the glucose transporter SLC2A4/GLUT4 and subsequent glucose transport in adipocytes. In EGF-induced cells, binds and activates MAP2K5/MEK5-MAPK7/ERK5 independently of its kinase activity and can activate JUN promoter through MEF2C. Through binding with SQSTM1/p62, functions in interleukin-1 signaling and activation of NF-kappa-B with the specific adapters RIPK1 and TRAF6. Participates in TNF-dependent transactivation of NF-kappa-B by phosphorylating and activating IKBKB kinase, which in turn leads to the degradation of NF-kappa-B inhibitors. In migrating astrocytes, forms a cytoplasmic complex with PARD6A and is recruited by CDC42 to function in the establishment of cell polarity along with the microtubule motor and dynein. In association with FEZ1, stimulates neuronal differentiation in PC12 cells. In the inflammatory response, is required for the T-helper 2 (Th2) differentiation process, including interleukin production, efficient activation of JAK1 and the subsequent phosphorylation and nuclear translocation of STAT6. May be involved in development of allergic airway inflammation (asthma), a process dependent on Th2 immune response. In the NF-kappa-B-mediated inflammatory response, can relieve SETD6-dependent repression of NF-kappa-B target genes by phosphorylating the RELA subunit at 'Ser-311'. Phosphorylates VAMP2 in vitro. Phosphorylates and activates LRRK1, which phosphorylates RAB proteins involved in intracellular trafficking. Involved in late synaptic long term potentiation phase in CA1 hippocampal cells and long term memory maintenance. The sequence is that of Protein kinase C zeta type (Prkcz) from Rattus norvegicus (Rat).